Here is a 353-residue protein sequence, read N- to C-terminus: UDP-N-acetylglucosamine--N-acetylmuramyl-(pentapeptide) pyrophosphoryl-undecaprenol N-acetylglucosamine transferase (353 aa).

Residues 10 to 12, N124, S183, and Q283 contribute to the UDP-N-acetyl-alpha-D-glucosamine site; that span reads TGG.

Belongs to the glycosyltransferase 28 family. MurG subfamily.

It localises to the cell inner membrane. The enzyme catalyses di-trans,octa-cis-undecaprenyl diphospho-N-acetyl-alpha-D-muramoyl-L-alanyl-D-glutamyl-meso-2,6-diaminopimeloyl-D-alanyl-D-alanine + UDP-N-acetyl-alpha-D-glucosamine = di-trans,octa-cis-undecaprenyl diphospho-[N-acetyl-alpha-D-glucosaminyl-(1-&gt;4)]-N-acetyl-alpha-D-muramoyl-L-alanyl-D-glutamyl-meso-2,6-diaminopimeloyl-D-alanyl-D-alanine + UDP + H(+). It functions in the pathway cell wall biogenesis; peptidoglycan biosynthesis. In terms of biological role, cell wall formation. Catalyzes the transfer of a GlcNAc subunit on undecaprenyl-pyrophosphoryl-MurNAc-pentapeptide (lipid intermediate I) to form undecaprenyl-pyrophosphoryl-MurNAc-(pentapeptide)GlcNAc (lipid intermediate II). The chain is UDP-N-acetylglucosamine--N-acetylmuramyl-(pentapeptide) pyrophosphoryl-undecaprenol N-acetylglucosamine transferase from Helicobacter acinonychis (strain Sheeba).